Here is a 406-residue protein sequence, read N- to C-terminus: Bifunctional enzyme IspD/IspF (406 aa).

Residues 1–246 are 2-C-methyl-D-erythritol 4-phosphate cytidylyltransferase; sequence MLQMPSKQPI…KLSASLLPDV (246 aa). The tract at residues 247-406 is 2-C-methyl-D-erythritol 2,4-cyclodiphosphate synthase; the sequence is RTGNGYDVHQ…ATVVYRGVKR (160 aa). The a divalent metal cation site is built by Asp253 and His255. Residues 253–255 and 279–280 each bind 4-CDP-2-C-methyl-D-erythritol 2-phosphate; these read DVH and HS. His287 provides a ligand contact to a divalent metal cation. 4-CDP-2-C-methyl-D-erythritol 2-phosphate contacts are provided by residues 301–303, 377–380, Phe384, and Arg387; these read DIG and TTNE.

This sequence in the N-terminal section; belongs to the IspD/TarI cytidylyltransferase family. IspD subfamily. In the C-terminal section; belongs to the IspF family. Requires a divalent metal cation as cofactor.

It carries out the reaction 2-C-methyl-D-erythritol 4-phosphate + CTP + H(+) = 4-CDP-2-C-methyl-D-erythritol + diphosphate. The catalysed reaction is 4-CDP-2-C-methyl-D-erythritol 2-phosphate = 2-C-methyl-D-erythritol 2,4-cyclic diphosphate + CMP. The protein operates within isoprenoid biosynthesis; isopentenyl diphosphate biosynthesis via DXP pathway; isopentenyl diphosphate from 1-deoxy-D-xylulose 5-phosphate: step 2/6. It functions in the pathway isoprenoid biosynthesis; isopentenyl diphosphate biosynthesis via DXP pathway; isopentenyl diphosphate from 1-deoxy-D-xylulose 5-phosphate: step 4/6. In terms of biological role, bifunctional enzyme that catalyzes the formation of 4-diphosphocytidyl-2-C-methyl-D-erythritol from CTP and 2-C-methyl-D-erythritol 4-phosphate (MEP) (IspD), and catalyzes the conversion of 4-diphosphocytidyl-2-C-methyl-D-erythritol 2-phosphate (CDP-ME2P) to 2-C-methyl-D-erythritol 2,4-cyclodiphosphate (ME-CPP) with a corresponding release of cytidine 5-monophosphate (CMP) (IspF). In Rhizobium leguminosarum bv. trifolii (strain WSM2304), this protein is Bifunctional enzyme IspD/IspF.